A 118-amino-acid chain; its full sequence is Holo-[acyl-carrier-protein] synthase (118 aa).

The Mg(2+) site is built by D8 and E58.

The protein belongs to the P-Pant transferase superfamily. AcpS family. Requires Mg(2+) as cofactor.

It localises to the cytoplasm. It catalyses the reaction apo-[ACP] + CoA = holo-[ACP] + adenosine 3',5'-bisphosphate + H(+). Transfers the 4'-phosphopantetheine moiety from coenzyme A to a Ser of acyl-carrier-protein. This chain is Holo-[acyl-carrier-protein] synthase, found in Listeria monocytogenes serotype 4a (strain HCC23).